The chain runs to 670 residues: Oligopeptidase PepF (670 aa).

Residue histidine 456 participates in Zn(2+) binding. Glutamate 457 is a catalytic residue. Histidine 460 and histidine 463 together coordinate Zn(2+).

This sequence belongs to the peptidase M3B family. It depends on Zn(2+) as a cofactor.

The protein resides in the cytoplasm. In terms of biological role, overexpression results in inhibition of sporulation initiation. This sporulation deficiency could be the result of hydrolysis by PepF of the PhrA peptide, a phosphatase regulator. Thus, overexpression of PepF appears to act at the level of the phosphorelay, most likely through modulation of the negative role played by phosphatases. Overexpression of PepF also affects the activity of the competence and sporulation stimulating factor PhrC. This chain is Oligopeptidase PepF, found in Bacillus subtilis (strain 168).